The chain runs to 367 residues: Heme A synthase (367 aa).

5 helical membrane passes run 25–45 (ALRFWLGFVLLALFCLVLVGG), 111–131 (LIARGIGVIFALPLLYFWLTG), 139–159 (WPLVGILALGGLQGFIGWWMV), 174–194 (LATHLVMACLIFAGCMWIMRG), and 210–230 (GFAATIAIFALFQIYLGALVA). His274 provides a ligand contact to heme. The next 3 helical transmembrane spans lie at 276–296 (IGAYTLFALTLINMVIALRAA), 305–325 (AVVLFSLVTLQAAIGIATLLM), and 327–347 (VPLHWGLLHQAGALVVFGFAI). His335 contacts heme.

This sequence belongs to the COX15/CtaA family. Type 2 subfamily. As to quaternary structure, interacts with CtaB. Heme b serves as cofactor.

Its subcellular location is the cell membrane. The catalysed reaction is Fe(II)-heme o + 2 A + H2O = Fe(II)-heme a + 2 AH2. It participates in porphyrin-containing compound metabolism; heme A biosynthesis; heme A from heme O: step 1/1. In terms of biological role, catalyzes the conversion of heme O to heme A by two successive hydroxylations of the methyl group at C8. The first hydroxylation forms heme I, the second hydroxylation results in an unstable dihydroxymethyl group, which spontaneously dehydrates, resulting in the formyl group of heme A. The chain is Heme A synthase from Rhizobium leguminosarum bv. trifolii (strain WSM2304).